The primary structure comprises 419 residues: MDEEEVEVVESPSEVLQPEVTVVVTGEPPEAAEEDLDYEEEEETSPEVIETLSLLDVLRVSAVMEDVIDQLSILGYIIPVQYERRQSLTQKASHEGASMITTTPKKSTSLLTKEKSMMAENKQRGQDFTFKKPTKQTMMTLETLKKIQNDRQYFSDVIANAMMEMQDSGSFTSLLKALGKERDSKMNFHDVITREEKGRKQIKTLQKQLLDVKRERQMQVQNGNEYIAHLRDQLQEMKAKTNLENLYMKRNAELQISQTQKKCNRAEELLLEEIEKLRMKTEEENRVHTEIEMFLKKQQQKLEEKLEFWMEKFDKDTEAKQNELNALKAAKASDLVHLQDLAKMIREYEQVIIEDRIEKEKTRKKLEQDDLELRSIVKLQAWWRGSVVRKEIGNFKMPKKDKDDSKDSKGKEKEKRRKK.

Disordered stretches follow at residues 25–45 (TGEP…EETS) and 394–419 (NFKM…RRKK). Over residues 30–45 (EAAEEDLDYEEEEETS) the composition is skewed to acidic residues. The IQ domain occupies 372–401 (ELRSIVKLQAWWRGSVVRKEIGNFKMPKKD). Residues 394–413 (NFKMPKKDKDDSKDSKGKEK) are compositionally biased toward basic and acidic residues.

It belongs to the DRC9 family. In terms of assembly, component of the nexin-dynein regulatory complex (N-DRC). Interacts (via IQ domain) with CALM when calcium levels are low. Does not interact with CALM in the presence of Ca(2+). Interacts with the HSP70 proteins HSPA1L and HSPA8. May form a complex with CAMK4 and HSP70. In terms of tissue distribution, expressed in the testes (at protein level). Also detected in oviduct (at protein level). Also detected in the trachea.

It localises to the cytoplasm. Its subcellular location is the cell projection. The protein resides in the cilium. It is found in the flagellum. The protein localises to the cytoskeleton. It localises to the flagellum axoneme. In terms of biological role, component of the nexin-dynein regulatory complex (N-DRC), a key regulator of ciliary/flagellar motility which maintains the alignment and integrity of the distal axoneme and regulates microtubule sliding in motile axonemes. Binds calmodulin when cellular Ca(2+) levels are low and thereby contributes to the regulation of calcium and calmodulin-dependent protein kinase IV (CAMK4) activity; contributes to the regulation of CAMK4 signaling cascades. Required for normal axoneme assembly in sperm flagella, normal sperm tail formation and for male fertility. This is Dynein regulatory complex protein 9 (Iqcg) from Mus musculus (Mouse).